We begin with the raw amino-acid sequence, 440 residues long: 3-phosphoshikimate 1-carboxyvinyltransferase (440 aa).

3-phosphoshikimate contacts are provided by lysine 26, serine 27, and arginine 31. Lysine 26 provides a ligand contact to phosphoenolpyruvate. Phosphoenolpyruvate is bound by residues glycine 99 and arginine 127. 3-phosphoshikimate contacts are provided by serine 172, glutamine 174, aspartate 320, and lysine 347. Phosphoenolpyruvate is bound at residue glutamine 174. The Proton acceptor role is filled by aspartate 320. Phosphoenolpyruvate contacts are provided by arginine 351 and arginine 392.

Belongs to the EPSP synthase family. In terms of assembly, monomer.

The protein resides in the cytoplasm. The catalysed reaction is 3-phosphoshikimate + phosphoenolpyruvate = 5-O-(1-carboxyvinyl)-3-phosphoshikimate + phosphate. It functions in the pathway metabolic intermediate biosynthesis; chorismate biosynthesis; chorismate from D-erythrose 4-phosphate and phosphoenolpyruvate: step 6/7. Its function is as follows. Catalyzes the transfer of the enolpyruvyl moiety of phosphoenolpyruvate (PEP) to the 5-hydroxyl of shikimate-3-phosphate (S3P) to produce enolpyruvyl shikimate-3-phosphate and inorganic phosphate. This Xanthomonas axonopodis pv. citri (strain 306) protein is 3-phosphoshikimate 1-carboxyvinyltransferase.